The sequence spans 476 residues: 2-(3-amino-3-carboxypropyl)histidine synthase subunit 2 (476 aa).

Residues 1–15 are compositionally biased toward polar residues; that stretch reads MTESAPSAFFTTSTP. Positions 1 to 24 are disordered; that stretch reads MTESAPSAFFTTSTPADHVHEEES. Residues C102, C123, and C347 each contribute to the [4Fe-4S] cluster site. Residues 451-476 are disordered; that stretch reads DGVSTAEDSTKMGEGRSGIAQGYSGK.

It belongs to the DPH1/DPH2 family. DPH2 subfamily. As to quaternary structure, component of the 2-(3-amino-3-carboxypropyl)histidine synthase complex composed of dph-1, dph-2, dph-3 and a NADH-dependent reductase. It depends on [4Fe-4S] cluster as a cofactor.

It participates in protein modification; peptidyl-diphthamide biosynthesis. Its function is as follows. Required for the first step of diphthamide biosynthesis, a post-translational modification of histidine which occurs in elongation factor 2. Dph-1 and dph-2 transfer a 3-amino-3-carboxypropyl (ACP) group from S-adenosyl-L-methionine (SAM) to a histidine residue, the reaction is assisted by a reduction system comprising dph-3 and a NADH-dependent reductase. Facilitates the reduction of the catalytic iron-sulfur cluster found in the dph-1 subunit. The sequence is that of 2-(3-amino-3-carboxypropyl)histidine synthase subunit 2 (dph-2) from Caenorhabditis elegans.